A 742-amino-acid polypeptide reads, in one-letter code: RING finger protein 145 homolog (742 aa).

Helical transmembrane passes span 109–129 (AAIILSYFVIFISLMFLTLPL), 138–158 (HFLSVFLFGVAYKLSAIYVDL), 178–198 (HGFHFLAQMLLVVLQSMLLEV), 233–253 (ACTGTMIFIATYMLYRAPSLI), 285–305 (ILELLTFTWITMFLMVLYVEL), 318–338 (ILLTGVAETTNTPITLAALAV), 368–388 (SGYTEAVSVVILCIQTGFLGM), 395–415 (ILLALVLYIVISALLQSLFEI), 438–458 (ICIALLLVVIPFFTTKTMLAL), 463–483 (IYTAIIIANSATVTARAIGVI), and 533–553 (VKVGFSFATFAILLFHVIVNI). Residues 592–630 (CAICFIEMKEEARITPCKHYFHGPCLRKWLAVKMVCPLC) form an RING-type; atypical zinc finger. 2 disordered regions span residues 642–684 (KSSS…PGDM) and 722–742 (AYESDSDAGSEELVIEEENNN). Residues 659-672 (AAVEENPENPEEQP) show a composition bias toward acidic residues.

The protein resides in the membrane. Its subcellular location is the golgi apparatus. It is found in the cis-Golgi network. The protein localises to the trans-Golgi network. It carries out the reaction S-ubiquitinyl-[E2 ubiquitin-conjugating enzyme]-L-cysteine + [acceptor protein]-L-lysine = [E2 ubiquitin-conjugating enzyme]-L-cysteine + N(6)-ubiquitinyl-[acceptor protein]-L-lysine.. Functionally, E3 ubiquitin ligase that catalyzes the direct transfer of ubiquitin from E2 ubiquitin-conjugating enzyme to a specific substrate. Acting downstream of probable Golgi transport protein eas-1, involved in inhibition of activation of transcription factor sbp-1, thereby playing a role in regulating AMsh glial cell size. This Caenorhabditis elegans protein is RING finger protein 145 homolog.